We begin with the raw amino-acid sequence, 221 residues long: CASP-like protein 4B1 (221 aa).

A disordered region spans residues 1–78; the sequence is MAMQLHAASP…HDHHGGGGGG (78 aa). Residues 1–87 lie on the Cytoplasmic side of the membrane; sequence MAMQLHAASP…GDEATQLLNG (87 aa). Residues 19 to 33 are compositionally biased toward pro residues; it reads SPPPPPPLSPHPEPA. Residues 50 to 62 are compositionally biased toward low complexity; that stretch reads APVATATTPLTPG. Residues 88–108 form a helical membrane-spanning segment; the sequence is IVLVLRAGAALLSFVAMALVA. The Extracellular segment spans residues 109–125; it reads SCRHGDWMDFLRYQEYR. The helical transmembrane segment at 126 to 146 threads the bilayer; it reads YLLGVSVVAFVYSAAQALKNF. Residues 147–160 are Cytoplasmic-facing; sequence RRRRRGAADASFLD. A helical transmembrane segment spans residues 161 to 181; that stretch reads FAGDQAVAYLLVTASAAALPI. Residues 182–196 are Extracellular-facing; the sequence is TIRMRSAVVNVFTDA. Residues 197 to 217 traverse the membrane as a helical segment; it reads IAASIALGFLAFAALALSAML. The Cytoplasmic segment spans residues 218 to 221; sequence SRHA.

It belongs to the Casparian strip membrane proteins (CASP) family. As to quaternary structure, homodimer and heterodimers.

Its subcellular location is the cell membrane. The polypeptide is CASP-like protein 4B1 (Hordeum vulgare subsp. vulgare (Domesticated barley)).